The following is a 691-amino-acid chain: Protein phosphatase 1 regulatory subunit 37 (691 aa).

A disordered region spans residues 1-43 (MEIAPQEAPPVPGADGDIEEAPAEAGSPSPASPPADGRLKAAA). Residues S50 and S56 each carry the phosphoserine modification. LRR repeat units follow at residues 220-240 (SLAV…MLLA), 248-269 (NLRE…AQLG), 277-297 (SLQI…AYIC), 306-326 (GLVT…AFLG), and 334-354 (SLET…RHLK). Residues 460–662 (EREEKEQPPQ…PEVKGGSCGL (203 aa)) are disordered. The span at 468-481 (PQLSASMPETTATE) shows a compositional bias: polar residues. Residues 505 to 523 (SDSDSDSDGEEEEEEEGER) show a composition bias toward acidic residues. S561 is modified (phosphoserine). Composition is skewed to pro residues over residues 584–605 (PASP…PSLP) and 620–634 (PQPP…PPLP).

Belongs to the PPP1R37 family. In terms of assembly, interacts with PPP1CA.

Inhibits phosphatase activity of protein phosphatase 1 (PP1) complexes. The chain is Protein phosphatase 1 regulatory subunit 37 (PPP1R37) from Homo sapiens (Human).